Here is a 184-residue protein sequence, read N- to C-terminus: Photosystem I assembly protein Ycf4 (184 aa).

2 helical membrane passes run 22 to 42 (FCWA…GTSS) and 57 to 77 (IVFF…LFIS).

Belongs to the Ycf4 family.

Its subcellular location is the plastid. It localises to the chloroplast thylakoid membrane. Functionally, seems to be required for the assembly of the photosystem I complex. This chain is Photosystem I assembly protein Ycf4, found in Helianthus annuus (Common sunflower).